The sequence spans 458 residues: Phosphoglucosamine mutase (458 aa).

Residue Ser106 is the Phosphoserine intermediate of the active site. Residues Ser106, Asp247, Asp249, and Asp251 each coordinate Mg(2+). Ser106 is modified (phosphoserine).

It belongs to the phosphohexose mutase family. It depends on Mg(2+) as a cofactor. Activated by phosphorylation.

The enzyme catalyses alpha-D-glucosamine 1-phosphate = D-glucosamine 6-phosphate. In terms of biological role, catalyzes the conversion of glucosamine-6-phosphate to glucosamine-1-phosphate. The protein is Phosphoglucosamine mutase of Chlamydia felis (strain Fe/C-56) (Chlamydophila felis).